The following is a 112-amino-acid chain: Large ribosomal subunit protein uL22 (112 aa).

This sequence belongs to the universal ribosomal protein uL22 family. Part of the 50S ribosomal subunit.

Functionally, this protein binds specifically to 23S rRNA; its binding is stimulated by other ribosomal proteins, e.g. L4, L17, and L20. It is important during the early stages of 50S assembly. It makes multiple contacts with different domains of the 23S rRNA in the assembled 50S subunit and ribosome. In terms of biological role, the globular domain of the protein is located near the polypeptide exit tunnel on the outside of the subunit, while an extended beta-hairpin is found that lines the wall of the exit tunnel in the center of the 70S ribosome. This chain is Large ribosomal subunit protein uL22, found in Desulfovibrio desulfuricans (strain ATCC 27774 / DSM 6949 / MB).